A 92-amino-acid chain; its full sequence is Small ribosomal subunit protein uS19 (92 aa).

Belongs to the universal ribosomal protein uS19 family.

Its function is as follows. Protein S19 forms a complex with S13 that binds strongly to the 16S ribosomal RNA. In Corynebacterium kroppenstedtii (strain DSM 44385 / JCM 11950 / CIP 105744 / CCUG 35717), this protein is Small ribosomal subunit protein uS19.